The sequence spans 533 residues: Phosphoenolpyruvate carboxykinase (ATP) (533 aa).

Substrate-binding residues include Arg-59, Tyr-199, and Lys-205. ATP-binding positions include Lys-205, His-224, and 240 to 248; that span reads GLSGTGKTT. Mn(2+)-binding residues include Lys-205 and His-224. Asp-261 provides a ligand contact to Mn(2+). Residues Glu-289, Arg-325, 441–442, and Thr-447 contribute to the ATP site; that span reads RI. Arg-325 provides a ligand contact to substrate.

The protein belongs to the phosphoenolpyruvate carboxykinase (ATP) family. In terms of assembly, monomer. Mn(2+) serves as cofactor.

It localises to the cytoplasm. The catalysed reaction is oxaloacetate + ATP = phosphoenolpyruvate + ADP + CO2. Its pathway is carbohydrate biosynthesis; gluconeogenesis. In terms of biological role, involved in the gluconeogenesis. Catalyzes the conversion of oxaloacetate (OAA) to phosphoenolpyruvate (PEP) through direct phosphoryl transfer between the nucleoside triphosphate and OAA. The sequence is that of Phosphoenolpyruvate carboxykinase (ATP) from Idiomarina loihiensis (strain ATCC BAA-735 / DSM 15497 / L2-TR).